A 549-amino-acid polypeptide reads, in one-letter code: Chaperonin GroEL (549 aa).

Residues 29–32 (TLGP), Lys50, 86–90 (DGTTT), Gly414, 477–479 (NAA), and Asp493 contribute to the ATP site.

Belongs to the chaperonin (HSP60) family. As to quaternary structure, forms a cylinder of 14 subunits composed of two heptameric rings stacked back-to-back. Interacts with the co-chaperonin GroES.

It is found in the cytoplasm. It carries out the reaction ATP + H2O + a folded polypeptide = ADP + phosphate + an unfolded polypeptide.. Functionally, together with its co-chaperonin GroES, plays an essential role in assisting protein folding. The GroEL-GroES system forms a nano-cage that allows encapsulation of the non-native substrate proteins and provides a physical environment optimized to promote and accelerate protein folding. The protein is Chaperonin GroEL of Geotalea uraniireducens (strain Rf4) (Geobacter uraniireducens).